The chain runs to 527 residues: GMP synthase [glutamine-hydrolyzing] (527 aa).

The 189-residue stretch at 20 to 208 (SVVILDYGSQ…LFDVCGCAPT (189 aa)) folds into the Glutamine amidotransferase type-1 domain. The active-site Nucleophile is cysteine 97. Active-site residues include histidine 182 and glutamate 184. In terms of domain architecture, GMPS ATP-PPase spans 209 to 402 (WTAESFVEQA…LGLPEEIVQR (194 aa)). 236-242 (SGGVDSS) serves as a coordination point for ATP.

As to quaternary structure, homodimer.

It catalyses the reaction XMP + L-glutamine + ATP + H2O = GMP + L-glutamate + AMP + diphosphate + 2 H(+). It functions in the pathway purine metabolism; GMP biosynthesis; GMP from XMP (L-Gln route): step 1/1. Functionally, catalyzes the synthesis of GMP from XMP. This Thermomicrobium roseum (strain ATCC 27502 / DSM 5159 / P-2) protein is GMP synthase [glutamine-hydrolyzing].